The primary structure comprises 432 residues: Metacaspase-1 (432 aa).

Residues 1–11 (MEVMDHHHHTS) are compositionally biased toward basic residues. 2 disordered regions span residues 1–21 (MEVM…TTRR) and 41–87 (PQPG…PNAP). Residues 12-21 (STRPNPTTRR) are compositionally biased toward low complexity. Positions 46–74 (GAPPPQGGYGYPQPPPPQQPYGYSQPPPQ) are enriched in pro residues. Catalysis depends on residues H223 and C279.

This sequence belongs to the peptidase C14B family.

In terms of biological role, involved in cell death (apoptosis). The chain is Metacaspase-1 (casA) from Sclerotinia sclerotiorum (strain ATCC 18683 / 1980 / Ss-1) (White mold).